A 364-amino-acid chain; its full sequence is Cobalt-precorrin-5B C(1)-methyltransferase (364 aa).

It belongs to the CbiD family.

It catalyses the reaction Co-precorrin-5B + S-adenosyl-L-methionine = Co-precorrin-6A + S-adenosyl-L-homocysteine. Its pathway is cofactor biosynthesis; adenosylcobalamin biosynthesis; cob(II)yrinate a,c-diamide from sirohydrochlorin (anaerobic route): step 6/10. Catalyzes the methylation of C-1 in cobalt-precorrin-5B to form cobalt-precorrin-6A. This Thermoplasma acidophilum (strain ATCC 25905 / DSM 1728 / JCM 9062 / NBRC 15155 / AMRC-C165) protein is Cobalt-precorrin-5B C(1)-methyltransferase.